We begin with the raw amino-acid sequence, 131 residues long: MSTETDEILERLKKITLLEAYELVKQIENTFGVDATIALSASNTNPSILPSKADETVVEEKTEFDVIIQEVPSAKRINVIKTVRSLTTLGLKEAKDLIESVPKVVCEAVSKEVAEETKKLLEEAGASIIIK.

It belongs to the bacterial ribosomal protein bL12 family. As to quaternary structure, homodimer. Part of the ribosomal stalk of the 50S ribosomal subunit. Forms a multimeric L10(L12)X complex, where L10 forms an elongated spine to which 2 to 4 L12 dimers bind in a sequential fashion. Binds GTP-bound translation factors.

It localises to the plastid. The protein resides in the chloroplast. Forms part of the ribosomal stalk which helps the ribosome interact with GTP-bound translation factors. Is thus essential for accurate translation. The sequence is that of Large ribosomal subunit protein bL12c from Euglena gracilis.